Consider the following 392-residue polypeptide: LL-diaminopimelate aminotransferase (392 aa).

Substrate-binding residues include Tyr15, Gly40, Lys104, Tyr128, and Asn178. Residues 103–104 (SK), Tyr128, Asn178, Tyr209, and 237–239 (SVS) contribute to the pyridoxal 5'-phosphate site. An N6-(pyridoxal phosphate)lysine modification is found at Lys240. A pyridoxal 5'-phosphate-binding site is contributed by Arg248. Arg366 contacts substrate.

The protein belongs to the class-I pyridoxal-phosphate-dependent aminotransferase family. LL-diaminopimelate aminotransferase subfamily. Homodimer. It depends on pyridoxal 5'-phosphate as a cofactor.

It carries out the reaction (2S,6S)-2,6-diaminopimelate + 2-oxoglutarate = (S)-2,3,4,5-tetrahydrodipicolinate + L-glutamate + H2O + H(+). Its pathway is amino-acid biosynthesis; L-lysine biosynthesis via DAP pathway; LL-2,6-diaminopimelate from (S)-tetrahydrodipicolinate (aminotransferase route): step 1/1. Involved in the synthesis of meso-diaminopimelate (m-DAP or DL-DAP), required for both lysine and peptidoglycan biosynthesis. Catalyzes the direct conversion of tetrahydrodipicolinate to LL-diaminopimelate. This Desulforudis audaxviator (strain MP104C) protein is LL-diaminopimelate aminotransferase.